The chain runs to 335 residues: Phenylalanine--tRNA ligase alpha subunit (335 aa).

A Mg(2+)-binding site is contributed by Glu-262.

This sequence belongs to the class-II aminoacyl-tRNA synthetase family. Phe-tRNA synthetase alpha subunit type 1 subfamily. In terms of assembly, tetramer of two alpha and two beta subunits. Mg(2+) is required as a cofactor.

It is found in the cytoplasm. The enzyme catalyses tRNA(Phe) + L-phenylalanine + ATP = L-phenylalanyl-tRNA(Phe) + AMP + diphosphate + H(+). This is Phenylalanine--tRNA ligase alpha subunit from Prochlorococcus marinus subsp. pastoris (strain CCMP1986 / NIES-2087 / MED4).